Consider the following 248-residue polypeptide: Pyridoxine 5'-phosphate synthase (248 aa).

A 3-amino-2-oxopropyl phosphate-binding site is contributed by Asn-11. A 1-deoxy-D-xylulose 5-phosphate-binding site is contributed by 13–14 (DH). Arg-22 serves as a coordination point for 3-amino-2-oxopropyl phosphate. His-47 functions as the Proton acceptor in the catalytic mechanism. 1-deoxy-D-xylulose 5-phosphate contacts are provided by Arg-49 and His-54. Catalysis depends on Glu-74, which acts as the Proton acceptor. A 1-deoxy-D-xylulose 5-phosphate-binding site is contributed by Thr-104. The active-site Proton donor is the His-198. 3-amino-2-oxopropyl phosphate contacts are provided by residues Gly-199 and 220–221 (GH).

It belongs to the PNP synthase family. Homooctamer; tetramer of dimers.

The protein localises to the cytoplasm. The catalysed reaction is 3-amino-2-oxopropyl phosphate + 1-deoxy-D-xylulose 5-phosphate = pyridoxine 5'-phosphate + phosphate + 2 H2O + H(+). It functions in the pathway cofactor biosynthesis; pyridoxine 5'-phosphate biosynthesis; pyridoxine 5'-phosphate from D-erythrose 4-phosphate: step 5/5. In terms of biological role, catalyzes the complicated ring closure reaction between the two acyclic compounds 1-deoxy-D-xylulose-5-phosphate (DXP) and 3-amino-2-oxopropyl phosphate (1-amino-acetone-3-phosphate or AAP) to form pyridoxine 5'-phosphate (PNP) and inorganic phosphate. The chain is Pyridoxine 5'-phosphate synthase from Ruegeria pomeroyi (strain ATCC 700808 / DSM 15171 / DSS-3) (Silicibacter pomeroyi).